The chain runs to 692 residues: E3 ubiquitin-protein ligase brl1 (692 aa).

The stretch at S302–K370 forms a coiled coil. The RING-type zinc-finger motif lies at C639–E679.

It belongs to the BRE1 family. As to quaternary structure, component of the histone H2B ubiquitin ligase complex (HULC) composed of at least brl1, brl2, rhp6 and shf1.

The protein localises to the nucleus. It carries out the reaction S-ubiquitinyl-[E2 ubiquitin-conjugating enzyme]-L-cysteine + [acceptor protein]-L-lysine = [E2 ubiquitin-conjugating enzyme]-L-cysteine + N(6)-ubiquitinyl-[acceptor protein]-L-lysine.. It functions in the pathway protein modification; protein ubiquitination. Its function is as follows. E3 ubiquitin-protein ligase which belongs to the histone H2B ubiquitin ligase complex (HULC) which mediates monoubiquitination of histone H2B to form H2BK123ub1. H2BK123ub1 gives a specific tag for epigenetic transcriptional activation and is also a prerequisite for H3K4me and H3K79me formation. This is E3 ubiquitin-protein ligase brl1 (brl1) from Schizosaccharomyces pombe (strain 972 / ATCC 24843) (Fission yeast).